Here is a 575-residue protein sequence, read N- to C-terminus: Preprotein translocase subunit SCY2, chloroplastic (575 aa).

The transit peptide at 1–34 (MNSSQACFFHFSLRPISLSHPSYAFLSKRDPFLC) directs the protein to the chloroplast. 10 helical membrane passes run 157-177 (FVTA…LPGF), 206-226 (LSLF…MQVL), 251-271 (IWWL…YTSL), 285-305 (VMMT…LCDT), 306-326 (ISES…ILTG), 346-366 (LPYL…AVVV), 414-434 (TTYL…PFLL), 447-467 (GAPP…FNIF), 509-529 (FWGG…DHYL), and 531-551 (SINQ…GSII).

Belongs to the SecY/SEC61-alpha family. Part of a second Sec protein translocation apparatus. Interacts probably with SECA2. In terms of tissue distribution, ubiquitous.

The protein resides in the plastid. The protein localises to the chloroplast membrane. Its subcellular location is the amyloplast membrane. It localises to the chloroplast thylakoid membrane. Its function is as follows. Involved in protein export. Probably interacts with other proteins to allow the postimport or conservative sorting pathway for inner membrane proteins in plastids. Central subunit of the protein translocation channel SecYE. Consists of two halves formed by TMs 1-5 and 6-10. These two domains form a lateral gate at the front which open onto the bilayer between TMs 2 and 7, and are clamped together by SecE at the back. The channel is closed by both a pore ring composed of hydrophobic SecY resides and a short helix (helix 2A) on the extracellular side of the membrane which forms a plug. The protein is Preprotein translocase subunit SCY2, chloroplastic (SCY2) of Arabidopsis thaliana (Mouse-ear cress).